The sequence spans 380 residues: Putative 8-amino-7-oxononanoate synthase (380 aa).

Residue Arg18 participates in substrate binding. 106–107 provides a ligand contact to pyridoxal 5'-phosphate; it reads GY. His131 is a substrate binding site. Pyridoxal 5'-phosphate contacts are provided by residues Ser179, 205–208, and 236–239; these read DEAH and TFGK. At Lys239 the chain carries N6-(pyridoxal phosphate)lysine. Thr352 contributes to the substrate binding site.

Belongs to the class-II pyridoxal-phosphate-dependent aminotransferase family. BioF subfamily. As to quaternary structure, homodimer. Pyridoxal 5'-phosphate serves as cofactor.

It carries out the reaction 6-carboxyhexanoyl-[ACP] + L-alanine + H(+) = (8S)-8-amino-7-oxononanoate + holo-[ACP] + CO2. It functions in the pathway cofactor biosynthesis; biotin biosynthesis. Its function is as follows. Catalyzes the decarboxylative condensation of pimeloyl-[acyl-carrier protein] and L-alanine to produce 8-amino-7-oxononanoate (AON), [acyl-carrier protein], and carbon dioxide. This chain is Putative 8-amino-7-oxononanoate synthase (bioF), found in Haemophilus influenzae (strain ATCC 51907 / DSM 11121 / KW20 / Rd).